We begin with the raw amino-acid sequence, 400 residues long: MSTGSLPLGLPSRDSLDGLRNSVDLPLLAAAALLLGLGLIMVASASMDLGERYYGNTWHFFQRQVLFAAIGLALATVMWAIPLERWERAGPWLLILVMVLLIAVLLPGVGRTVNGATRWIPIGMFNLQVAEPVKLLVVMYLAGYIVRHYSALRLHLRGFVRPLVVLGFGTVLLLLQPDFGGAAIMLAIGMGMLFLAGAKLWQFAALGATIAVGMAFVAVAAPYRVARLTAFLDPWQDPFATGFQLTQSLIAIGSGGWFGTGLGNSVQKLFYLPEAHNDFLFAVFAEEFGFIGVLALIALFAVVVWRCVKIGLWAERAGHAFGSHLAFGVAIWLALQSALNLAVNMGLLPTKGMTLPFLSYGGSSLIVTLMAIGLVMRVYREAQIPAPRQSTPPRRKRGQA.

Residues 1-24 (MSTGSLPLGLPSRDSLDGLRNSVD) are Cytoplasmic-facing. The helical transmembrane segment at 25-45 (LPLLAAAALLLGLGLIMVASA) threads the bilayer. Residues 46 to 63 (SMDLGERYYGNTWHFFQR) lie on the Periplasmic side of the membrane. The chain crosses the membrane as a helical span at residues 64–84 (QVLFAAIGLALATVMWAIPLE). The Cytoplasmic segment spans residues 85 to 88 (RWER). Residues 89–109 (AGPWLLILVMVLLIAVLLPGV) traverse the membrane as a helical segment. Residues 110 to 118 (GRTVNGATR) lie on the Periplasmic side of the membrane. A helical transmembrane segment spans residues 119–139 (WIPIGMFNLQVAEPVKLLVVM). Topologically, residues 140–153 (YLAGYIVRHYSALR) are cytoplasmic. Residues 154-174 (LHLRGFVRPLVVLGFGTVLLL) traverse the membrane as a helical segment. Residues 175–177 (LQP) lie on the Periplasmic side of the membrane. The chain crosses the membrane as a helical span at residues 178 to 198 (DFGGAAIMLAIGMGMLFLAGA). Residue Lys-199 is a topological domain, cytoplasmic. Residues 200 to 220 (LWQFAALGATIAVGMAFVAVA) traverse the membrane as a helical segment. Over 221 to 278 (APYRVARLTAFLDPWQDPFATGFQLTQSLIAIGSGGWFGTGLGNSVQKLFYLPEAHND) the chain is Periplasmic. The chain crosses the membrane as a helical span at residues 279-299 (FLFAVFAEEFGFIGVLALIAL). At 300-324 (FAVVVWRCVKIGLWAERAGHAFGSH) the chain is on the cytoplasmic side. Residues 325-345 (LAFGVAIWLALQSALNLAVNM) form a helical membrane-spanning segment. The Periplasmic portion of the chain corresponds to 346-354 (GLLPTKGMT). The chain crosses the membrane as a helical span at residues 355–375 (LPFLSYGGSSLIVTLMAIGLV). The Cytoplasmic segment spans residues 376–400 (MRVYREAQIPAPRQSTPPRRKRGQA).

The protein belongs to the SEDS family. FtsW subfamily.

The protein resides in the cell inner membrane. The enzyme catalyses [GlcNAc-(1-&gt;4)-Mur2Ac(oyl-L-Ala-gamma-D-Glu-L-Lys-D-Ala-D-Ala)](n)-di-trans,octa-cis-undecaprenyl diphosphate + beta-D-GlcNAc-(1-&gt;4)-Mur2Ac(oyl-L-Ala-gamma-D-Glu-L-Lys-D-Ala-D-Ala)-di-trans,octa-cis-undecaprenyl diphosphate = [GlcNAc-(1-&gt;4)-Mur2Ac(oyl-L-Ala-gamma-D-Glu-L-Lys-D-Ala-D-Ala)](n+1)-di-trans,octa-cis-undecaprenyl diphosphate + di-trans,octa-cis-undecaprenyl diphosphate + H(+). The protein operates within cell wall biogenesis; peptidoglycan biosynthesis. In terms of biological role, peptidoglycan polymerase that is essential for cell division. The polypeptide is Probable peptidoglycan glycosyltransferase FtsW (Thioalkalivibrio sp. (strain K90mix)).